The following is a 417-amino-acid chain: Methyltransferase/ribosomally synthesized cyclic peptide dendrothelin A precursor dbihMA (417 aa).

Positions 1–251 are methyltransferase domain; the sequence is MESSTQTKPG…GVSTFYIPPK (251 aa). Residues Arg-72, Tyr-76, and Tyr-98 contribute to the active site. The S-adenosyl-L-methionine site is built by Tyr-98, His-100, Val-103, Ala-130, Gln-172, Ala-213, Ser-244, and Thr-245. The interval 252–378 is clasp domain; that stretch reads ARKDINTDII…WAIRCAMKNM (127 aa). The tract at residues 379–399 is precursor leader; it reads PSSLLEAASQSVEEASMNGFP. 2 positions are modified to N-methylvaline: Val-401 and Val-403. The residue at position 404 (Thr-404) is an N-methylthreonine. Gly-405 carries the post-translational modification N-methylglycine. Ile-406 carries the N-methylisoleucine modification. Val-407 bears the N-methylvaline mark. Gly-408 bears the N-methylglycine mark. Ile-410 bears the N-methylisoleucine mark. Position 411 is an N-methylglycine (Gly-411). The residue at position 413 (Val-413) is an N-methylvaline.

It in the N-terminal section; belongs to the precorrin methyltransferase family. In terms of assembly, homodimer. Post-translationally, dbiMA automethylates at Val-401, Val-403, Thr-404, Gly-405, Ile-406, Val-407, Gly-408, Ile-410, Gly-411 and Val-413 before being processed by the prolyloligopeptidase dbiP which likely forms a peptidyl ester upon removal of the follower propeptide, which then undergoes macrocyclization with the N-terminus of the modified core peptide. Peptide backbone alpha-N-methylations change the physicochemical properties of amide bonds to provide structural constraints and other favorable characteristics including biological membrane permeability to peptides.

Its pathway is mycotoxin biosynthesis. Its function is as follows. Fusion protein of the methyltransferase dbiM and the dendrothelin core peptide; part of the gene cluster that mediates the biosynthesis of dendrothelin A, a highly methylated cyclic dodecapeptide showing slight nematodicidal activity. Dendrothelin A derives from the C-terminus of the dbiMA protein, and it is the dbiMA protein that methylates its own C-terminus using S-adenosyl methionine (SAM). The C-terminus is subsequently cleaved off and macrocyclized by the prolyloligopeptidase dbiP to give the final product. The polypeptide is Methyltransferase/ribosomally synthesized cyclic peptide dendrothelin A precursor dbihMA (Dendrothele bispora (strain CBS 962.96)).